A 141-amino-acid polypeptide reads, in one-letter code: Large ribosomal subunit protein uL11 (141 aa).

This sequence belongs to the universal ribosomal protein uL11 family. As to quaternary structure, part of the ribosomal stalk of the 50S ribosomal subunit. Interacts with L10 and the large rRNA to form the base of the stalk. L10 forms an elongated spine to which L12 dimers bind in a sequential fashion forming a multimeric L10(L12)X complex. In terms of processing, one or more lysine residues are methylated.

Forms part of the ribosomal stalk which helps the ribosome interact with GTP-bound translation factors. The polypeptide is Large ribosomal subunit protein uL11 (Chlamydia caviae (strain ATCC VR-813 / DSM 19441 / 03DC25 / GPIC) (Chlamydophila caviae)).